Here is a 319-residue protein sequence, read N- to C-terminus: Acetaldehyde dehydrogenase 1 (319 aa).

Cys-129 acts as the Acyl-thioester intermediate in catalysis. NAD(+)-binding positions include 160 to 168 and Asn-287; that span reads SAGPGTRAN.

It belongs to the acetaldehyde dehydrogenase family.

The enzyme catalyses acetaldehyde + NAD(+) + CoA = acetyl-CoA + NADH + H(+). The protein is Acetaldehyde dehydrogenase 1 of Burkholderia lata (strain ATCC 17760 / DSM 23089 / LMG 22485 / NCIMB 9086 / R18194 / 383).